The following is a 436-amino-acid chain: Drebrin-like protein (436 aa).

The ADF-H domain occupies 2-133; sequence AVNLSRNGPA…EPECIMEKVA (132 aa). A Phosphothreonine modification is found at Thr26. A Phosphoserine modification is found at Ser160. Lys176 is modified (N6-acetyllysine). The stretch at 179-233 forms a coiled coil; it reads FWAKAEKEEENRRLEEKRRAEEERQRLEEERRERELQEAARREQRYQEQHRSAGA. 2 stretches are compositionally biased toward basic and acidic residues: residues 185–229 and 264–275; these read KEEE…EQHR and HPREIFKQKERA. Positions 185–341 are disordered; the sequence is KEEENRRLEE…AQTEEEPTYE (157 aa). Residues 276-286 show a composition bias toward polar residues; that stretch reads MSTTSVTSSQP. Phosphoserine is present on residues Ser277, Ser280, Ser283, and Ser291. A compositionally biased stretch (polar residues) spans 294 to 303; the sequence is LQKQLTQPET. Lys296 carries the N6-acetyllysine modification. Thr299 carries the phosphothreonine modification. Tyr340 and Tyr350 each carry phosphotyrosine. One can recognise an SH3 domain in the interval 377-436; it reads GQGLCARALYDYQAADDTEISFDPENLITGIEVIDEGWWRGYGPDGHFGMFPANYVELIE.

The protein belongs to the ABP1 family. As to quaternary structure, interacts with SHANK3, SYN1 and PRAM1. Interacts with SHANK2. Interacts with FGD1, DNM1 and MAP4K1. Interacts with ANKRD54. Interacts with COBL. Interacts with WASL and WIPF1. Detected in hippocampus neurons and in the Purkinje cell layer in cerebellum (at protein level). Predominantly expressed in brain, thymus and spleen. Also found in testis, heart and lung. Little or no expression detected in ovary or muscle.

The protein localises to the cytoplasm. Its subcellular location is the cytoskeleton. It is found in the cell projection. The protein resides in the lamellipodium. It localises to the ruffle. The protein localises to the cell cortex. Its subcellular location is the cytosol. It is found in the synapse. The protein resides in the perikaryon. It localises to the neuron projection. The protein localises to the cell membrane. Its subcellular location is the cytoplasmic vesicle. It is found in the clathrin-coated vesicle membrane. The protein resides in the golgi apparatus membrane. It localises to the podosome. The protein localises to the early endosome. Its subcellular location is the dendrite. It is found in the postsynaptic density. Its function is as follows. Adapter protein that binds F-actin and DNM1, and thereby plays a role in receptor-mediated endocytosis. Plays a role in the reorganization of the actin cytoskeleton, formation of cell projections, such as neurites, in neuron morphogenesis and synapse formation via its interaction with WASL and COBL. Does not bind G-actin and promote actin polymerization by itself. Required for the formation of organized podosome rosettes. May act as a common effector of antigen receptor-signaling pathways in leukocytes. Acts as a key component of the immunological synapse that regulates T-cell activation by bridging TCRs and the actin cytoskeleton to gene activation and endocytic processes. This is Drebrin-like protein from Mus musculus (Mouse).